Here is a 353-residue protein sequence, read N- to C-terminus: Photosystem II D2 protein (353 aa).

At threonine 2 the chain carries N-acetylthreonine. At threonine 2 the chain carries Phosphothreonine. Residues 41–61 form a helical membrane-spanning segment; sequence CAYFALGGWFTGTTFVTSWYT. Chlorophyll a is bound at residue histidine 118. The chain crosses the membrane as a helical span at residues 125–141; the sequence is GFMLRQFELARSVQLRP. Residues glutamine 130 and asparagine 143 each coordinate pheophytin a. Residues 153 to 166 form a helical membrane-spanning segment; sequence VFVSVFLIYPLGQS. Histidine 198 provides a ligand contact to chlorophyll a. Residues 208–228 traverse the membrane as a helical segment; the sequence is AALLCAIHGATVENTLFEDGD. 2 residues coordinate a plastoquinone: histidine 215 and phenylalanine 262. Histidine 215 contributes to the Fe cation binding site. Histidine 269 contacts Fe cation. Residues 279-295 form a helical membrane-spanning segment; it reads GLWMSALGVVGLALNLR.

The protein belongs to the reaction center PufL/M/PsbA/D family. In terms of assembly, PSII is composed of 1 copy each of membrane proteins PsbA, PsbB, PsbC, PsbD, PsbE, PsbF, PsbH, PsbI, PsbJ, PsbK, PsbL, PsbM, PsbT, PsbX, PsbY, PsbZ, Psb30/Ycf12, at least 3 peripheral proteins of the oxygen-evolving complex and a large number of cofactors. It forms dimeric complexes. The D1/D2 heterodimer binds P680, chlorophylls that are the primary electron donor of PSII, and subsequent electron acceptors. It shares a non-heme iron and each subunit binds pheophytin, quinone, additional chlorophylls, carotenoids and lipids. There is also a Cl(-1) ion associated with D1 and D2, which is required for oxygen evolution. The PSII complex binds additional chlorophylls, carotenoids and specific lipids. serves as cofactor.

The protein localises to the plastid. The protein resides in the chloroplast thylakoid membrane. It carries out the reaction 2 a plastoquinone + 4 hnu + 2 H2O = 2 a plastoquinol + O2. Its function is as follows. Photosystem II (PSII) is a light-driven water:plastoquinone oxidoreductase that uses light energy to abstract electrons from H(2)O, generating O(2) and a proton gradient subsequently used for ATP formation. It consists of a core antenna complex that captures photons, and an electron transfer chain that converts photonic excitation into a charge separation. The D1/D2 (PsbA/PsbD) reaction center heterodimer binds P680, the primary electron donor of PSII as well as several subsequent electron acceptors. D2 is needed for assembly of a stable PSII complex. This Platanus occidentalis (Sycamore) protein is Photosystem II D2 protein.